A 176-amino-acid chain; its full sequence is Cytochrome b (176 aa).

The next 3 membrane-spanning stretches (helical) occupy residues 33-53 (FGSL…FLAM), 77-98 (WVLR…YLHV), and 113-133 (WNMG…GYVL). The heme b site is built by His-83 and His-97.

This sequence belongs to the cytochrome b family. The cytochrome bc1 complex contains 11 subunits: 3 respiratory subunits (MT-CYB, CYC1 and UQCRFS1), 2 core proteins (UQCRC1 and UQCRC2) and 6 low-molecular weight proteins (UQCRH/QCR6, UQCRB/QCR7, UQCRQ/QCR8, UQCR10/QCR9, UQCR11/QCR10 and a cleavage product of UQCRFS1). This cytochrome bc1 complex then forms a dimer. Heme b serves as cofactor.

It is found in the mitochondrion inner membrane. In terms of biological role, component of the ubiquinol-cytochrome c reductase complex (complex III or cytochrome b-c1 complex) that is part of the mitochondrial respiratory chain. The b-c1 complex mediates electron transfer from ubiquinol to cytochrome c. Contributes to the generation of a proton gradient across the mitochondrial membrane that is then used for ATP synthesis. The polypeptide is Cytochrome b (MT-CYB) (Nycticeius humeralis (Evening bat)).